Here is a 354-residue protein sequence, read N- to C-terminus: Uroporphyrinogen decarboxylase (354 aa).

Residues 27–31 (RQAGR), Asp77, Tyr154, Thr209, and His327 contribute to the substrate site.

The protein belongs to the uroporphyrinogen decarboxylase family. As to quaternary structure, homodimer.

Its subcellular location is the cytoplasm. It carries out the reaction uroporphyrinogen III + 4 H(+) = coproporphyrinogen III + 4 CO2. The protein operates within porphyrin-containing compound metabolism; protoporphyrin-IX biosynthesis; coproporphyrinogen-III from 5-aminolevulinate: step 4/4. In terms of biological role, catalyzes the decarboxylation of four acetate groups of uroporphyrinogen-III to yield coproporphyrinogen-III. This Sodalis glossinidius (strain morsitans) protein is Uroporphyrinogen decarboxylase.